The sequence spans 57 residues: Small polypeptide DEVIL 20 (57 aa).

Asparagine 5 carries an N-linked (GlcNAc...) asparagine glycan. Positions 16-47 (TFKAKCSHMVRKQRAKFYILGRCLAMLVCGRG) are required for DVL/RTFL small polypeptide activity. The helical transmembrane segment at 29–45 (RAKFYILGRCLAMLVCG) threads the bilayer.

It belongs to the DVL/RTFL small polypeptides family.

It localises to the cell membrane. Functionally, small polypeptide acting as a regulatory molecule which coordinates cellular responses required for differentiation, growth and development, probably by restricting polar cell proliferation in lateral organs and coordinating socket cell recruitment and differentiation at trichome sites. The protein is Small polypeptide DEVIL 20 of Arabidopsis thaliana (Mouse-ear cress).